Reading from the N-terminus, the 175-residue chain is Large ribosomal subunit protein uL10 (175 aa).

It belongs to the universal ribosomal protein uL10 family. Part of the ribosomal stalk of the 50S ribosomal subunit. The N-terminus interacts with L11 and the large rRNA to form the base of the stalk. The C-terminus forms an elongated spine to which L12 dimers bind in a sequential fashion forming a multimeric L10(L12)X complex.

Forms part of the ribosomal stalk, playing a central role in the interaction of the ribosome with GTP-bound translation factors. The protein is Large ribosomal subunit protein uL10 of Prochlorococcus marinus (strain MIT 9215).